We begin with the raw amino-acid sequence, 149 residues long: FAD synthase (149 aa).

Residues 10-11 (TF), 15-18 (HPGH), D95, and Y123 contribute to the ATP site.

Belongs to the archaeal FAD synthase family. As to quaternary structure, homodimer. It depends on Co(2+) as a cofactor.

The enzyme catalyses FMN + ATP + H(+) = FAD + diphosphate. Its pathway is cofactor biosynthesis; FAD biosynthesis; FAD from FMN: step 1/1. With respect to regulation, is inhibited by the product PPi. Catalyzes the transfer of the AMP portion of ATP to flavin mononucleotide (FMN) to produce flavin adenine dinucleotide (FAD) coenzyme. To a lesser extent, is also able to utilize other nucleotides such as CTP and GTP as substrates, producing the modified coenzymes, flavin cytosine dinucleotide (FCD) and flavin guanine dinucleotide (FGD), respectively. Does not catalyze the reverse reaction to produce FMN and ATP from FAD and PPi. Does not function as a glycerol-3-phosphate cytidylyltransferase, as previously annotated in the complete genome. In Methanocaldococcus jannaschii (strain ATCC 43067 / DSM 2661 / JAL-1 / JCM 10045 / NBRC 100440) (Methanococcus jannaschii), this protein is FAD synthase (ribL).